A 367-amino-acid chain; its full sequence is UDP-N-acetylglucosamine--N-acetylmuramyl-(pentapeptide) pyrophosphoryl-undecaprenol N-acetylglucosamine transferase (367 aa).

UDP-N-acetyl-alpha-D-glucosamine-binding positions include 15 to 17, Asn127, Arg163, Ser191, Ile249, and Gln294; that span reads TGG.

This sequence belongs to the glycosyltransferase 28 family. MurG subfamily.

The protein resides in the cell inner membrane. The catalysed reaction is di-trans,octa-cis-undecaprenyl diphospho-N-acetyl-alpha-D-muramoyl-L-alanyl-D-glutamyl-meso-2,6-diaminopimeloyl-D-alanyl-D-alanine + UDP-N-acetyl-alpha-D-glucosamine = di-trans,octa-cis-undecaprenyl diphospho-[N-acetyl-alpha-D-glucosaminyl-(1-&gt;4)]-N-acetyl-alpha-D-muramoyl-L-alanyl-D-glutamyl-meso-2,6-diaminopimeloyl-D-alanyl-D-alanine + UDP + H(+). It functions in the pathway cell wall biogenesis; peptidoglycan biosynthesis. Cell wall formation. Catalyzes the transfer of a GlcNAc subunit on undecaprenyl-pyrophosphoryl-MurNAc-pentapeptide (lipid intermediate I) to form undecaprenyl-pyrophosphoryl-MurNAc-(pentapeptide)GlcNAc (lipid intermediate II). The chain is UDP-N-acetylglucosamine--N-acetylmuramyl-(pentapeptide) pyrophosphoryl-undecaprenol N-acetylglucosamine transferase from Burkholderia orbicola (strain MC0-3).